A 237-amino-acid polypeptide reads, in one-letter code: Lipid A 1-diphosphate synthase (237 aa).

Topologically, residues methionine 1–leucine 5 are cytoplasmic. The chain crosses the membrane as a helical span at residues proline 6–valine 26. The Periplasmic segment spans residues asparagine 27–arginine 62. A helical membrane pass occupies residues alanine 63–glutamate 83. At asparagine 84 to arginine 90 the chain is on the cytoplasmic side. A helical membrane pass occupies residues isoleucine 91 to alanine 111. Residues leucine 112–serine 145 are Periplasmic-facing. Lysine 167 is a topological domain (cytoplasmic). The helical transmembrane segment at valine 168–glycine 188 threads the bilayer. Residues alanine 189–aspartate 194 are Periplasmic-facing. The chain crosses the membrane as a helical span at residues isoleucine 195–leucine 215. Residues serine 216 to lysine 237 lie on the Cytoplasmic side of the membrane.

This sequence belongs to the LpxT phosphotransferase family.

Its subcellular location is the cell inner membrane. The enzyme catalyses di-trans,octa-cis-undecaprenyl diphosphate + alpha-Kdo-(2-&gt;4)-alpha-Kdo-(2-&gt;6)-lipid A (E. coli) = (Kdo)2-lipid A 1-diphosphate + di-trans,octa-cis-undecaprenyl phosphate. It participates in bacterial outer membrane biogenesis; lipopolysaccharide biosynthesis. Inhibited by BasR. This regulation does not occur at the level of transcription, but rather following the assembly of LpxT into the inner membrane. Functionally, involved in the modification of the lipid A domain of lipopolysaccharides (LPS). Transfers a phosphate group from undecaprenyl pyrophosphate (C55-PP) to lipid A to form lipid A 1-diphosphate. Contributes to the recycling of undecaprenyl phosphate (C55-P). In vitro, has low undecaprenyl-diphosphate phosphatase activity. The protein is Lipid A 1-diphosphate synthase of Escherichia coli (strain K12).